The sequence spans 33 residues: Toxin Bcg III 25.52 (33 aa).

A disulfide bridge connects residues Cys6 and Cys28.

The protein localises to the secreted. Its subcellular location is the nematocyst. The polypeptide is Toxin Bcg III 25.52 (Bunodosoma cangicum (Sea anemone)).